A 79-amino-acid chain; its full sequence is MORN repeat-containing protein 2 (79 aa).

MORN repeat units lie at residues 15–36 (YEGQFKDNMFHGLGTYTFPNGA) and 38–55 (YTGNFNENRVEGEGEYTD).

The protein localises to the cytoplasmic vesicle. It localises to the secretory vesicle. The protein resides in the acrosome. It is found in the nucleus. Functionally, might have a role in spermatogenesis. The protein is MORN repeat-containing protein 2 of Homo sapiens (Human).